The following is a 73-amino-acid chain: MNLNEESRENVVFMIEEIKKKLQVVNGSVLNPDSVDMSRYEDLRDIYDMIKKKNNFSVSEMDAIAVELGRLRK.

It belongs to the UPF0435 family.

The polypeptide is UPF0435 protein BH2488 (Halalkalibacterium halodurans (strain ATCC BAA-125 / DSM 18197 / FERM 7344 / JCM 9153 / C-125) (Bacillus halodurans)).